Here is a 353-residue protein sequence, read N- to C-terminus: Phosphoribosylformylglycinamidine cyclo-ligase (353 aa).

It belongs to the AIR synthase family.

It localises to the cytoplasm. It catalyses the reaction 2-formamido-N(1)-(5-O-phospho-beta-D-ribosyl)acetamidine + ATP = 5-amino-1-(5-phospho-beta-D-ribosyl)imidazole + ADP + phosphate + H(+). It functions in the pathway purine metabolism; IMP biosynthesis via de novo pathway; 5-amino-1-(5-phospho-D-ribosyl)imidazole from N(2)-formyl-N(1)-(5-phospho-D-ribosyl)glycinamide: step 2/2. This is Phosphoribosylformylglycinamidine cyclo-ligase from Pseudomonas aeruginosa (strain ATCC 15692 / DSM 22644 / CIP 104116 / JCM 14847 / LMG 12228 / 1C / PRS 101 / PAO1).